The following is a 172-amino-acid chain: Adenine phosphoribosyltransferase (172 aa).

This sequence belongs to the purine/pyrimidine phosphoribosyltransferase family. In terms of assembly, homodimer.

It is found in the cytoplasm. The catalysed reaction is AMP + diphosphate = 5-phospho-alpha-D-ribose 1-diphosphate + adenine. The protein operates within purine metabolism; AMP biosynthesis via salvage pathway; AMP from adenine: step 1/1. In terms of biological role, catalyzes a salvage reaction resulting in the formation of AMP, that is energically less costly than de novo synthesis. The chain is Adenine phosphoribosyltransferase from Prochlorococcus marinus (strain MIT 9211).